A 277-amino-acid chain; its full sequence is Inhibition of morphological differentiation protein (277 aa).

Mg(2+) contacts are provided by Asp-18, Asp-20, and Asp-192.

It belongs to the HAD-like hydrolase superfamily. SerB family.

This chain is Inhibition of morphological differentiation protein, found in Streptomyces azureus.